A 462-amino-acid chain; its full sequence is Cysteine--tRNA ligase (462 aa).

Zn(2+) is bound at residue cysteine 30. The 'HIGH' region motif lies at 32–42 (MTVYDYCHVGH). Residues cysteine 214, histidine 239, and glutamate 243 each coordinate Zn(2+). Residues 271-275 (KMSKS) carry the 'KMSKS' region motif. Residue lysine 274 participates in ATP binding.

It belongs to the class-I aminoacyl-tRNA synthetase family. Monomer. Requires Zn(2+) as cofactor.

The protein localises to the cytoplasm. The catalysed reaction is tRNA(Cys) + L-cysteine + ATP = L-cysteinyl-tRNA(Cys) + AMP + diphosphate. The chain is Cysteine--tRNA ligase from Cupriavidus pinatubonensis (strain JMP 134 / LMG 1197) (Cupriavidus necator (strain JMP 134)).